The following is a 144-amino-acid chain: Large ribosomal subunit protein uL11 (144 aa).

The protein belongs to the universal ribosomal protein uL11 family. Part of the ribosomal stalk of the 50S ribosomal subunit. Interacts with L10 and the large rRNA to form the base of the stalk. L10 forms an elongated spine to which L12 dimers bind in a sequential fashion forming a multimeric L10(L12)X complex. Post-translationally, one or more lysine residues are methylated.

Its function is as follows. Forms part of the ribosomal stalk which helps the ribosome interact with GTP-bound translation factors. This is Large ribosomal subunit protein uL11 from Neisseria meningitidis serogroup A / serotype 4A (strain DSM 15465 / Z2491).